Reading from the N-terminus, the 229-residue chain is Aquaporin Z (229 aa).

2 helical membrane passes run 8–28 (FFGT…AAGV) and 33–53 (IGYL…AYAI). The NPA 1 motif lies at 62-64 (NPA). 3 helical membrane-spanning segments follow: residues 81–101 (LPYV…LYLI), 131–151 (AALV…LGAT), and 158–178 (GFAP…SIPV). An NPA 2 motif is present at residues 184 to 186 (NPA). Residues 199–219 (AVSQLWLFWVAPILGAVLGAL) traverse the membrane as a helical segment.

It belongs to the MIP/aquaporin (TC 1.A.8) family. In terms of assembly, homotetramer.

It localises to the cell inner membrane. It catalyses the reaction H2O(in) = H2O(out). Channel that permits osmotically driven movement of water in both directions. It is involved in the osmoregulation and in the maintenance of cell turgor during volume expansion in rapidly growing cells. It mediates rapid entry or exit of water in response to abrupt changes in osmolarity. The polypeptide is Aquaporin Z (Pseudomonas aeruginosa (strain ATCC 15692 / DSM 22644 / CIP 104116 / JCM 14847 / LMG 12228 / 1C / PRS 101 / PAO1)).